A 192-amino-acid polypeptide reads, in one-letter code: Orotate phosphoribosyltransferase (192 aa).

Position 116-124 (116-124) interacts with 5-phospho-alpha-D-ribose 1-diphosphate; it reads EDIVTTGLS. Residues Thr-120 and Arg-148 each coordinate orotate.

The protein belongs to the purine/pyrimidine phosphoribosyltransferase family. PyrE subfamily. Homodimer. Mg(2+) is required as a cofactor.

The catalysed reaction is orotidine 5'-phosphate + diphosphate = orotate + 5-phospho-alpha-D-ribose 1-diphosphate. Its pathway is pyrimidine metabolism; UMP biosynthesis via de novo pathway; UMP from orotate: step 1/2. Functionally, catalyzes the transfer of a ribosyl phosphate group from 5-phosphoribose 1-diphosphate to orotate, leading to the formation of orotidine monophosphate (OMP). The protein is Orotate phosphoribosyltransferase of Brucella abortus (strain S19).